The primary structure comprises 207 residues: Inner membrane-spanning protein YciB (207 aa).

A run of 6 helical transmembrane segments spans residues Phe3–Gln23, Val51–Leu71, Thr78–His98, Trp105–Phe125, Phe150–Phe170, and Phe178–Leu198.

The protein belongs to the YciB family.

Its subcellular location is the cell inner membrane. Its function is as follows. Plays a role in cell envelope biogenesis, maintenance of cell envelope integrity and membrane homeostasis. The protein is Inner membrane-spanning protein YciB of Methylibium petroleiphilum (strain ATCC BAA-1232 / LMG 22953 / PM1).